The primary structure comprises 393 residues: MNGRTREYLKGRFGDHYRRASLSPPPAANEREWGYITWGDGGTTMVRHHSYLDVTGGGDLGGFLAGERPRHVYFSAGRYDDPGASSMGQKGWRGSDLVFDLDADHLPGIDPSETSYAAMLEACKGALSRLLDLLVEDFGFEPLAVVFSGGRGYHVHVRRDDVLELDRTARREIVEYVLGEGLDFDDIVSTQAVAGSAGRSSPAQKRTLPDGGWAGRVRTRLTTLFDEVLTMEEAAALDRLREFDGIGEGKAKAALTAARNNREELTKGNVDVHPAVYSIARELFETVVEAESAPIDEPVTTDINRLIRLPGSLHGGTGLEVQHLDRDAIDAFDPLSDAVPETFVGNEIAIYTQEPTTVELRGESFRLSEGVSSVPEYVGVFAMARGYASKAGE.

Residues Asp100, Asp102, and Asp296 contribute to the active site.

This sequence belongs to the eukaryotic-type primase small subunit family. In terms of assembly, heterodimer of a small subunit (PriS) and a large subunit (PriL). It depends on Mg(2+) as a cofactor. Mn(2+) is required as a cofactor.

In terms of biological role, catalytic subunit of DNA primase, an RNA polymerase that catalyzes the synthesis of short RNA molecules used as primers for DNA polymerase during DNA replication. The small subunit contains the primase catalytic core and has DNA synthesis activity on its own. Binding to the large subunit stabilizes and modulates the activity, increasing the rate of DNA synthesis while decreasing the length of the DNA fragments, and conferring RNA synthesis capability. The DNA polymerase activity may enable DNA primase to also catalyze primer extension after primer synthesis. May also play a role in DNA repair. This is DNA primase small subunit PriS from Natronomonas pharaonis (strain ATCC 35678 / DSM 2160 / CIP 103997 / JCM 8858 / NBRC 14720 / NCIMB 2260 / Gabara) (Halobacterium pharaonis).